Here is a 137-residue protein sequence, read N- to C-terminus: uncharacterized protein (137 aa).

The region spanning asparagine 5–glutamine 136 is the HTH marR-type domain. A DNA-binding region (H-T-H motif) is located at residues glutamine 51 to glutamate 74.

This is an uncharacterized protein from Bacillus subtilis (strain 168).